Reading from the N-terminus, the 433-residue chain is N-lysine methyltransferase SMYD2 (433 aa).

Positions 7-241 constitute an SET domain; the sequence is GGLERFCSAG…PGDEVFTSYI (235 aa). 17–19 lines the S-adenosyl-L-methionine pocket; that stretch reads KGR. Residues Cys52, Cys55, Cys65, Cys68, Cys74, Cys78, His86, and Cys90 each coordinate Zn(2+). Residues 52 to 90 form an MYND-type zinc finger; sequence CECCFARKEGLSKCGRCKQAFYCDVECQKEDWPLHKLEC. S-adenosyl-L-methionine contacts are provided by residues His137, 206 to 207, and 258 to 260; these read NH and YFF. At Ser283 the chain carries Phosphoserine.

The protein belongs to the class V-like SAM-binding methyltransferase superfamily. In terms of assembly, interacts with RNA polymerase II and HELZ. Interacts with SIN3A and HDAC1. Interacts (via MYND-type zinc finger) with EPB41L3. Interacts (via SET domain) with p53/TP53. Interacts with RB1 and HSP90AA1.

It localises to the cytoplasm. It is found in the cytosol. The protein localises to the nucleus. It catalyses the reaction L-lysyl(4)-[histone H3] + 3 S-adenosyl-L-methionine = N(6),N(6),N(6)-trimethyl-L-lysyl(4)-[histone H3] + 3 S-adenosyl-L-homocysteine + 3 H(+). It carries out the reaction L-lysyl-[protein] + S-adenosyl-L-methionine = N(6)-methyl-L-lysyl-[protein] + S-adenosyl-L-homocysteine + H(+). Its function is as follows. Protein-lysine N-methyltransferase that methylates both histones and non-histone proteins, including p53/TP53 and RB1. Specifically trimethylates histone H3 'Lys-4' (H3K4me3) in vivo. The activity requires interaction with HSP90alpha. Shows even higher methyltransferase activity on p53/TP53. Monomethylates 'Lys-370' of p53/TP53, leading to decreased DNA-binding activity and subsequent transcriptional regulation activity of p53/TP53. Monomethylates RB1 at 'Lys-860'. The chain is N-lysine methyltransferase SMYD2 (Smyd2) from Rattus norvegicus (Rat).